Consider the following 1437-residue polypeptide: IQ domain-containing protein N (1437 aa).

One can recognise an IQ 1 domain in the interval 84-112 (SRAATVIQASWKGYRLRQKLISQMTAAKA). Disordered regions lie at residues 332 to 353 (TSPT…SLSN), 416 to 440 (SQAQ…KPSP), and 848 to 878 (STGS…QNPR). Low complexity predominate over residues 422-440 (TVSTSSKTSPSSPTVKPSP). Positions 861 to 878 (AQPQLHSHAPNKTMQNPR) are enriched in polar residues. IQ domains lie at 1190–1216 (QAVV…QWAT), 1217–1239 (IIQA…RATT), 1240–1258 (IIQA…ARQV), 1361–1389 (QHRA…SAAK), and 1390–1413 (MVQA…LGTG).

Interacts with calmodulin. In terms of tissue distribution, expressed in testis, in elongating spermatids (at protein level).

Essential for spermiogenesis and fertilization. May be required for manchette assembly in elongating spermatids. In Mus musculus (Mouse), this protein is IQ domain-containing protein N (Iqcn).